The sequence spans 241 residues: Sugar fermentation stimulation protein homolog (241 aa).

The protein belongs to the SfsA family.

This is Sugar fermentation stimulation protein homolog from Nostoc punctiforme (strain ATCC 29133 / PCC 73102).